The following is a 197-amino-acid chain: ATP-dependent Clp protease proteolytic subunit (197 aa).

Serine 97 functions as the Nucleophile in the catalytic mechanism. Histidine 122 is an active-site residue.

The protein belongs to the peptidase S14 family. As to quaternary structure, fourteen ClpP subunits assemble into 2 heptameric rings which stack back to back to give a disk-like structure with a central cavity, resembling the structure of eukaryotic proteasomes.

It localises to the cytoplasm. It catalyses the reaction Hydrolysis of proteins to small peptides in the presence of ATP and magnesium. alpha-casein is the usual test substrate. In the absence of ATP, only oligopeptides shorter than five residues are hydrolyzed (such as succinyl-Leu-Tyr-|-NHMec, and Leu-Tyr-Leu-|-Tyr-Trp, in which cleavage of the -Tyr-|-Leu- and -Tyr-|-Trp bonds also occurs).. In terms of biological role, cleaves peptides in various proteins in a process that requires ATP hydrolysis. Has a chymotrypsin-like activity. Plays a major role in the degradation of misfolded proteins. The polypeptide is ATP-dependent Clp protease proteolytic subunit (Trichlorobacter lovleyi (strain ATCC BAA-1151 / DSM 17278 / SZ) (Geobacter lovleyi)).